A 479-amino-acid chain; its full sequence is Ubiquinone biosynthesis monooxygenase COQ6, mitochondrial (479 aa).

The N-terminal 17 residues, 1–17 (MFFSKVMLTRRILVRGL), are a transit peptide targeting the mitochondrion.

This sequence belongs to the UbiH/COQ6 family. As to quaternary structure, component of a multi-subunit COQ enzyme complex, composed of at least COQ3, COQ4, COQ5, COQ6, COQ7 and COQ9. It depends on FAD as a cofactor.

It is found in the mitochondrion inner membrane. It carries out the reaction 4-hydroxy-3-(all-trans-hexaprenyl)benzoate + 2 reduced [2Fe-2S]-[ferredoxin] + O2 + 2 H(+) = 3,4-dihydroxy-5-(all-trans-hexaprenyl)benzoate + 2 oxidized [2Fe-2S]-[ferredoxin] + H2O. The catalysed reaction is 2-methoxy-6-(all-trans-hexaprenyl)phenol + 2 reduced [2Fe-2S]-[ferredoxin] + O2 + 2 H(+) = 2-methoxy-6-(all-trans-hexaprenyl)benzene-1,4-diol + 2 oxidized [2Fe-2S]-[ferredoxin] + H2O. The enzyme catalyses 4-amino-3-(all-trans-hexaprenyl)benzoate + 2 reduced [2Fe-2S]-[ferredoxin] + O2 + 2 H(+) = 4-amino-5-hydroxy-3-(all-trans-hexaprenyl)benzoate + 2 oxidized [2Fe-2S]-[ferredoxin] + H2O. It catalyses the reaction 4-amino-5-hydroxy-3-(all-trans-hexaprenyl)benzoate + 4 reduced [2Fe-2S]-[ferredoxin] + O2 + 5 H(+) = 3,4-dihydroxy-5-(all-trans-hexaprenyl)benzoate + 4 oxidized [2Fe-2S]-[ferredoxin] + NH4(+) + H2O. It participates in cofactor biosynthesis; ubiquinone biosynthesis. Functionally, FAD-dependent monooxygenase required for two non-consecutive steps during ubiquinone biosynthesis. Required for the C5-ring hydroxylation during ubiquinone biosynthesis by catalyzing the hydroxylation of 4-hydroxy-3-(all-trans-hexaprenyl)benzoic acid to 3,4-dihydroxy-5-(all-trans-hexaprenyl)benzoic acid. Also acts downstream of COQ4, for the C1-hydroxylation during ubiquinone biosynthesis by catalyzing the hydroxylation of 2-methoxy-6-(all-trans-hexaprenyl)phenol to 2-methoxy-6-(all-trans-hexaprenyl)benzene-1,4-diol. The electrons required for the hydroxylation reaction are funneled indirectly from NADPH via ferredoxin (YAH1) and ferredoxin reductase (ARH1) to COQ6. Can also convert 3-hexaprenyl-4-aminobenzoic acid (HAB), a COQ2-prenylated pABA, to DHHB in a two step process. HAB is first hydroxylated at C5 to yield 3-hexaprenyl-4-amino-5-hydroxybenzoic acid (HHAB) which is further deaminated at C4 by COQ6 to produce DHHB. This is Ubiquinone biosynthesis monooxygenase COQ6, mitochondrial from Saccharomyces cerevisiae (strain ATCC 204508 / S288c) (Baker's yeast).